Here is a 311-residue protein sequence, read N- to C-terminus: Dihydroorotate dehydrogenase A (fumarate) (311 aa).

FMN-binding positions include serine 19 and 43-44 (KS). Substrate-binding positions include lysine 43, 67–71 (NSMGL), and asparagine 127. Position 127 (asparagine 127) interacts with FMN. Cysteine 130 (nucleophile) is an active-site residue. Positions 164 and 192 each coordinate FMN. 193 to 194 (NS) contributes to the substrate binding site. Residues glycine 221, 249 to 250 (GG), and 271 to 272 (GT) each bind FMN.

This sequence belongs to the dihydroorotate dehydrogenase family. Type 1 subfamily. In terms of assembly, homodimer. The cofactor is FMN.

The protein localises to the cytoplasm. The catalysed reaction is (S)-dihydroorotate + fumarate = orotate + succinate. It functions in the pathway pyrimidine metabolism; UMP biosynthesis via de novo pathway. In terms of biological role, catalyzes the conversion of dihydroorotate to orotate with fumarate as the electron acceptor. This chain is Dihydroorotate dehydrogenase A (fumarate) (pyrDA), found in Lactococcus lactis subsp. lactis (strain IL1403) (Streptococcus lactis).